The primary structure comprises 300 residues: Probable low-salt glycan biosynthesis reductase Agl14 (300 aa).

Residues 10-12, 46-47, and 70-72 contribute to the NADH site; these read GLL, DI, and AYT. Residues 11 to 12, 46 to 47, 70 to 72, Y109, Y135, and K139 each bind NADPH; these read LL, DI, and AYT. Y135 and K139 together coordinate NADH. Catalysis depends on Y135, which acts as the Proton donor/acceptor.

The protein belongs to the dTDP-4-dehydrorhamnose reductase family.

It participates in protein modification; protein glycosylation. It functions in the pathway cell surface structure biogenesis; S-layer biogenesis. Its function is as follows. Reductase involved in N-glycan biosynthetic pathway that takes place under low-salt conditions (1.75 M instead of 3.4 M). Participates in the formation of the tetrasaccharide present at 'Asn-532' of S-layer glycoprotein Csg, consisting of a sulfated hexose, 2 hexoses and rhamnose. Involved in the addition of final rhamnose (sugar 4) of the tetrasaccharide on the dolichol phosphate carrier. The polypeptide is Probable low-salt glycan biosynthesis reductase Agl14 (agl14) (Haloferax volcanii (strain ATCC 29605 / DSM 3757 / JCM 8879 / NBRC 14742 / NCIMB 2012 / VKM B-1768 / DS2) (Halobacterium volcanii)).